The primary structure comprises 89 residues: OMEGA-ectatommitoxin(02)-Rm1a (89 aa).

The N-terminal stretch at 1–30 (MKDSYISIVIAYLMVTFILVSSMPIEGEKG) is a signal peptide. 3 cysteine pairs are disulfide-bonded: Cys-39–Cys-52, Cys-47–Cys-68, and Cys-70–Cys-79. Residues 43–80 (YANYCFNGKCVHVVAQDEPGKPCYSCICDKFYIGKRCG) enclose the EGF-like domain.

It belongs to the EGF domain peptide family. As to expression, expressed by the venom gland.

Its subcellular location is the secreted. Functionally, ant peptide with probable defensive activity which acts as a potent agonist of the mammalian epidermal growth factor receptor (EGFR). Mimics, both structurally and functionally, vertebrate epidermal growth factor (EGF) peptide hormones. In vivo, intraplantar injection in mice causes long-lasting (several days) hypersensitivity of the injected paw to both mechanical and thermal stimuli. Its long-lasting effect is unusual for venom toxins whose effects are usually immediate. One possible explanation is that it would reduce the duration of a nest attack, discourage future attacks, or enhance the actions of subsequent exposure to other pain-inducing venom peptides. This Rhytidoponera metallica (Australian green-headed ant) protein is OMEGA-ectatommitoxin(02)-Rm1a.